The primary structure comprises 466 residues: Tissue alpha-L-fucosidase (466 aa).

The first 31 residues, 1-31, serve as a signal peptide directing secretion; it reads MRAPGMRSRPAGPALLLLLLFLGAAESVRRA. The residue at position 170 (Thr170) is a Phosphothreonine. 3 N-linked (GlcNAc...) asparagine glycosylation sites follow: Asn241, Asn268, and Asn382.

This sequence belongs to the glycosyl hydrolase 29 family. In terms of assembly, homotetramer.

It is found in the lysosome. It catalyses the reaction an alpha-L-fucoside + H2O = L-fucose + an alcohol. The catalysed reaction is a neolactoside IV(2)-alpha-Fuc-nLc4Cer(d18:1(4E)) + H2O = a neolactoside nLc4Cer(d18:1(4E)) + L-fucose. It carries out the reaction a neolactoside IV(2)-alpha-Fuc-nLc4Cer(d18:0) + H2O = a neolactoside nLc4Cer(d18:0) + L-fucose. Functionally, alpha-L-fucosidase is responsible for hydrolyzing the alpha-1,6-linked fucose joined to the reducing-end N-acetylglucosamine of the carbohydrate moieties of glycoproteins. This Homo sapiens (Human) protein is Tissue alpha-L-fucosidase.